The following is a 708-amino-acid chain: Metabotropic glutamate receptor-like protein L (708 aa).

A signal peptide spans 1-24 (MKLIIKNLILLLVSCLYFLSNVSC). 4 N-linked (GlcNAc...) asparagine glycosylation sites follow: Asn21, Asn235, Asn310, and Asn366. The Extracellular portion of the chain corresponds to 25 to 370 (DQEVHMALLL…TTGSINKTFM (346 aa)). A helical transmembrane segment spans residues 371-391 (AVSILEMAICLIIGIIVIFFF). At 392–401 (SRNINIIYST) the chain is on the cytoplasmic side. Residues 402-422 (IPYCLTILLGASLIAVAIFLW) form a helical membrane-spanning segment. Over 423-435 (NLRDLNTQICTSK) the chain is Extracellular. Residues 436-456 (IWMASLGYNVLIGFIIIKSSL) traverse the membrane as a helical segment. Over 457 to 479 (IYFKFKEMVKSKNEKISPIPFGR) the chain is Cytoplasmic. A helical transmembrane segment spans residues 480-500 (IVLWFVPLLIIDCVLLIIYST). Residues 501–531 (SGNPGKIDSLGLDGIGRYEYTQNCVNNLTGD) lie on the Extracellular side of the membrane. The N-linked (GlcNAc...) asparagine glycan is linked to Asn527. A helical membrane pass occupies residues 532 to 552 (IILYIILVFHGLQLLYGCVIA). Residues 553 to 568 (WKTRVIDLEEFIEAHD) are Cytoplasmic-facing. Residues 569-589 (FATAIYLITFCSFIIVILMVG) form a helical membrane-spanning segment. The Extracellular portion of the chain corresponds to 590-597 (VTSTSNRN). A helical transmembrane segment spans residues 598–618 (TIISACAIFSSFSCVLIIFGA). At 619 to 708 (KFWKIYKPVE…SSRAAAQNDN (90 aa)) the chain is on the cytoplasmic side. The tract at residues 638–681 (KPQKSYSGSGGSGNSSGSKSKKTSAHSSTSGVKSGTSAPTQTSQ) is disordered. Positions 669–681 (VKSGTSAPTQTSQ) are enriched in polar residues.

The protein in the N-terminal section; belongs to the BMP lipoprotein family. In the C-terminal section; belongs to the G-protein coupled receptor 3 family. GABA-B receptor subfamily.

It localises to the membrane. In Dictyostelium discoideum (Social amoeba), this protein is Metabotropic glutamate receptor-like protein L (far1).